The sequence spans 356 residues: tRNA N6-adenosine threonylcarbamoyltransferase (356 aa).

Residues H115 and H119 each coordinate Fe cation. Residues 138 to 142 (LVSGG), D171, G184, and N283 contribute to the substrate site. D311 is a Fe cation binding site.

The protein belongs to the KAE1 / TsaD family. The cofactor is Fe(2+).

Its subcellular location is the cytoplasm. It carries out the reaction L-threonylcarbamoyladenylate + adenosine(37) in tRNA = N(6)-L-threonylcarbamoyladenosine(37) in tRNA + AMP + H(+). Required for the formation of a threonylcarbamoyl group on adenosine at position 37 (t(6)A37) in tRNAs that read codons beginning with adenine. Is involved in the transfer of the threonylcarbamoyl moiety of threonylcarbamoyl-AMP (TC-AMP) to the N6 group of A37, together with TsaE and TsaB. TsaD likely plays a direct catalytic role in this reaction. This is tRNA N6-adenosine threonylcarbamoyltransferase from Prochlorococcus marinus (strain MIT 9515).